The following is a 147-amino-acid chain: uncharacterized protein (147 aa).

Residues 1–137 (MRDNTIGSLI…LYELMTKVHK (137 aa)) form the HTH marR-type domain. Positions 53–76 (QMELAEKVTVTQGGISRMLTRLEK) form a DNA-binding region, H-T-H motif.

This is an uncharacterized protein from Bacillus thuringiensis subsp. konkukian (strain 97-27).